The primary structure comprises 99 residues: Carboxysome shell vertex protein CcmL (99 aa).

In terms of domain architecture, BMV spans 1–83; it reads MRIAKVRGTV…VDAAVIAIID (83 aa).

It belongs to the CcmL/EutN family. CcmL subfamily. As to quaternary structure, homopentamer. Interacts with full-length CcmM.

The protein localises to the carboxysome. In terms of biological role, probably forms vertices in the carboxysome, a polyhedral inclusion where RuBisCO (ribulose bisphosphate carboxylase, rbcL-rbcS) is sequestered. Has been modeled to induce curvature upon insertion into an otherwise flat hexagonal molecular layer of CcmK subunits. Beta-carboxysome assembly initiates when soluble RuBisCO is condensed into a liquid matrix in a pre-carboxysome by the RbcS-like domains of probably both CcmM58 and CcmM35. CcmN interacts with the N-terminus of CcmM58, and then recruits the CcmK2 major shell protein via CcmN's encapsulation peptide. Shell formation requires CcmK proteins and CcmO. CcmL caps the otherwise elongated carboxysome. Once fully encapsulated carboxysomes are formed, they migrate within the cell probably via interactions with the cytoskeleton. This chain is Carboxysome shell vertex protein CcmL, found in Synechococcus elongatus (strain ATCC 33912 / PCC 7942 / FACHB-805) (Anacystis nidulans R2).